Reading from the N-terminus, the 267-residue chain is DNA repair protein RecO (267 aa).

It belongs to the RecO family.

Involved in DNA repair and RecF pathway recombination. This is DNA repair protein RecO from Mesoplasma florum (strain ATCC 33453 / NBRC 100688 / NCTC 11704 / L1) (Acholeplasma florum).